The chain runs to 456 residues: Bifunctional protein GlmU (456 aa).

Residues Met1–Arg229 form a pyrophosphorylase region. Residues Leu11–Gly14, Lys25, Gln76, Gly81–Thr82, Tyr103–Asp105, Gly140, Glu154, Asn169, and Asn227 contribute to the UDP-N-acetyl-alpha-D-glucosamine site. Asp105 provides a ligand contact to Mg(2+). A Mg(2+)-binding site is contributed by Asn227. The tract at residues Leu230–Glu250 is linker. Residues Gly251–Lys456 are N-acetyltransferase. The UDP-N-acetyl-alpha-D-glucosamine site is built by Arg333 and Lys351. The Proton acceptor role is filled by His363. Residues Tyr366 and Asn377 each coordinate UDP-N-acetyl-alpha-D-glucosamine. Residues Ala380, Asn386 to Tyr387, Ser405, Ala423, and Arg440 each bind acetyl-CoA.

It in the N-terminal section; belongs to the N-acetylglucosamine-1-phosphate uridyltransferase family. In the C-terminal section; belongs to the transferase hexapeptide repeat family. In terms of assembly, homotrimer. It depends on Mg(2+) as a cofactor.

The protein localises to the cytoplasm. It carries out the reaction alpha-D-glucosamine 1-phosphate + acetyl-CoA = N-acetyl-alpha-D-glucosamine 1-phosphate + CoA + H(+). The enzyme catalyses N-acetyl-alpha-D-glucosamine 1-phosphate + UTP + H(+) = UDP-N-acetyl-alpha-D-glucosamine + diphosphate. It functions in the pathway nucleotide-sugar biosynthesis; UDP-N-acetyl-alpha-D-glucosamine biosynthesis; N-acetyl-alpha-D-glucosamine 1-phosphate from alpha-D-glucosamine 6-phosphate (route II): step 2/2. It participates in nucleotide-sugar biosynthesis; UDP-N-acetyl-alpha-D-glucosamine biosynthesis; UDP-N-acetyl-alpha-D-glucosamine from N-acetyl-alpha-D-glucosamine 1-phosphate: step 1/1. The protein operates within bacterial outer membrane biogenesis; LPS lipid A biosynthesis. Its function is as follows. Catalyzes the last two sequential reactions in the de novo biosynthetic pathway for UDP-N-acetylglucosamine (UDP-GlcNAc). The C-terminal domain catalyzes the transfer of acetyl group from acetyl coenzyme A to glucosamine-1-phosphate (GlcN-1-P) to produce N-acetylglucosamine-1-phosphate (GlcNAc-1-P), which is converted into UDP-GlcNAc by the transfer of uridine 5-monophosphate (from uridine 5-triphosphate), a reaction catalyzed by the N-terminal domain. The protein is Bifunctional protein GlmU of Haemophilus influenzae (strain PittGG).